Here is a 208-residue protein sequence, read N- to C-terminus: Probable GTP-binding protein EngB (208 aa).

The EngB-type G domain occupies 29 to 203 (EGREVAFAGR…WDKLGEWLGI (175 aa)). Residues 37-44 (GRSNAGKS), 64-68 (GRTQL), 82-85 (DLPG), 149-152 (TKAD), and 182-184 (FSA) each bind GTP. Positions 44 and 66 each coordinate Mg(2+).

The protein belongs to the TRAFAC class TrmE-Era-EngA-EngB-Septin-like GTPase superfamily. EngB GTPase family. Mg(2+) serves as cofactor.

Necessary for normal cell division and for the maintenance of normal septation. The protein is Probable GTP-binding protein EngB of Alcanivorax borkumensis (strain ATCC 700651 / DSM 11573 / NCIMB 13689 / SK2).